The chain runs to 638 residues: 1-deoxy-D-xylulose-5-phosphate synthase (638 aa).

Thiamine diphosphate is bound by residues His79 and 120 to 122; that span reads AHS. Asp151 contributes to the Mg(2+) binding site. Residues 152-153, Asn180, Tyr289, and Glu371 contribute to the thiamine diphosphate site; that span reads GA. Asn180 is a binding site for Mg(2+).

Belongs to the transketolase family. DXPS subfamily. In terms of assembly, homodimer. Mg(2+) is required as a cofactor. Requires thiamine diphosphate as cofactor.

The enzyme catalyses D-glyceraldehyde 3-phosphate + pyruvate + H(+) = 1-deoxy-D-xylulose 5-phosphate + CO2. Its pathway is metabolic intermediate biosynthesis; 1-deoxy-D-xylulose 5-phosphate biosynthesis; 1-deoxy-D-xylulose 5-phosphate from D-glyceraldehyde 3-phosphate and pyruvate: step 1/1. Functionally, catalyzes the acyloin condensation reaction between C atoms 2 and 3 of pyruvate and glyceraldehyde 3-phosphate to yield 1-deoxy-D-xylulose-5-phosphate (DXP). The chain is 1-deoxy-D-xylulose-5-phosphate synthase from Rhizobium etli (strain ATCC 51251 / DSM 11541 / JCM 21823 / NBRC 15573 / CFN 42).